We begin with the raw amino-acid sequence, 451 residues long: MERFAVILAAGKGTRMKSKLYKVLHPVLGKPMVEHVVDQLDQIGVSRQIVIVGHGAEAVQDTLGTRVEYAVQEEQLGTGHAVQMAEAELAGKSGATLVVCGDTPLLTAETLEALLAHHEAQQAKVTVLTAIADDATGYGRVVRGEDGNVTKVVEHKDASEAELAINEINTGTYVFDNELLFDALKQVGNNNAQGEYYLPDVISIAKEAGEVVAAHTAPTFDETIGVNDRVALSQAEAIMRKRTNERLMREGVTFMDPASTYISPDVVIGSDTVIYPGTVILGKTTIGSECVIGPNSDIRNSVIEDHAVVRQSVVTDSRIGEAAQVGPFAHLRQQAVLGANTRVGNFVEIKKSTFGDGAKASHLSYIGDASIGERVNLGCGSITVNYDGKNKFETVVEDDAFVGCNVNLIAPVKVGKGAIVAAGSTITSDVPEEALAIARERQTNKEGYTKR.

Residues 1-229 (MERFAVILAA…FDETIGVNDR (229 aa)) are pyrophosphorylase. Residues 8 to 11 (LAAG), lysine 22, glutamine 72, and 77 to 78 (GT) each bind UDP-N-acetyl-alpha-D-glucosamine. Residue aspartate 102 coordinates Mg(2+). The UDP-N-acetyl-alpha-D-glucosamine site is built by glycine 139, glutamate 154, asparagine 169, and asparagine 227. Asparagine 227 contacts Mg(2+). The interval 230-250 (VALSQAEAIMRKRTNERLMRE) is linker. Positions 251-451 (GVTFMDPAST…QTNKEGYTKR (201 aa)) are N-acetyltransferase. Residues arginine 332 and lysine 350 each coordinate UDP-N-acetyl-alpha-D-glucosamine. Residue histidine 362 is the Proton acceptor of the active site. Tyrosine 365 and asparagine 376 together coordinate UDP-N-acetyl-alpha-D-glucosamine. Acetyl-CoA-binding positions include 385–386 (NY), alanine 422, and arginine 439.

The protein in the N-terminal section; belongs to the N-acetylglucosamine-1-phosphate uridyltransferase family. In the C-terminal section; belongs to the transferase hexapeptide repeat family. In terms of assembly, homotrimer. Mg(2+) serves as cofactor.

It is found in the cytoplasm. It carries out the reaction alpha-D-glucosamine 1-phosphate + acetyl-CoA = N-acetyl-alpha-D-glucosamine 1-phosphate + CoA + H(+). The catalysed reaction is N-acetyl-alpha-D-glucosamine 1-phosphate + UTP + H(+) = UDP-N-acetyl-alpha-D-glucosamine + diphosphate. It functions in the pathway nucleotide-sugar biosynthesis; UDP-N-acetyl-alpha-D-glucosamine biosynthesis; N-acetyl-alpha-D-glucosamine 1-phosphate from alpha-D-glucosamine 6-phosphate (route II): step 2/2. It participates in nucleotide-sugar biosynthesis; UDP-N-acetyl-alpha-D-glucosamine biosynthesis; UDP-N-acetyl-alpha-D-glucosamine from N-acetyl-alpha-D-glucosamine 1-phosphate: step 1/1. The protein operates within bacterial outer membrane biogenesis; LPS lipid A biosynthesis. Catalyzes the last two sequential reactions in the de novo biosynthetic pathway for UDP-N-acetylglucosamine (UDP-GlcNAc). The C-terminal domain catalyzes the transfer of acetyl group from acetyl coenzyme A to glucosamine-1-phosphate (GlcN-1-P) to produce N-acetylglucosamine-1-phosphate (GlcNAc-1-P), which is converted into UDP-GlcNAc by the transfer of uridine 5-monophosphate (from uridine 5-triphosphate), a reaction catalyzed by the N-terminal domain. The polypeptide is Bifunctional protein GlmU (Exiguobacterium sp. (strain ATCC BAA-1283 / AT1b)).